The sequence spans 428 residues: 3-phosphoshikimate 1-carboxyvinyltransferase (428 aa).

3-phosphoshikimate is bound by residues K21, S22, and R26. A phosphoenolpyruvate-binding site is contributed by K21. Phosphoenolpyruvate is bound by residues G91 and R119. 3-phosphoshikimate contacts are provided by S164, Q166, D313, and K340. Q166 lines the phosphoenolpyruvate pocket. Catalysis depends on D313, which acts as the Proton acceptor. Phosphoenolpyruvate-binding residues include R344 and R386.

It belongs to the EPSP synthase family. In terms of assembly, monomer.

The protein resides in the cytoplasm. The enzyme catalyses 3-phosphoshikimate + phosphoenolpyruvate = 5-O-(1-carboxyvinyl)-3-phosphoshikimate + phosphate. Its pathway is metabolic intermediate biosynthesis; chorismate biosynthesis; chorismate from D-erythrose 4-phosphate and phosphoenolpyruvate: step 6/7. Its function is as follows. Catalyzes the transfer of the enolpyruvyl moiety of phosphoenolpyruvate (PEP) to the 5-hydroxyl of shikimate-3-phosphate (S3P) to produce enolpyruvyl shikimate-3-phosphate and inorganic phosphate. The sequence is that of 3-phosphoshikimate 1-carboxyvinyltransferase from Campylobacter jejuni subsp. jejuni serotype O:2 (strain ATCC 700819 / NCTC 11168).